Consider the following 349-residue polypeptide: Ion-translocating oxidoreductase complex subunit D (349 aa).

The next 3 membrane-spanning stretches (helical) occupy residues 36-56, 77-99, and 124-144; these read CAFF…VALS, SAML…WMIV, and AMAA…SWIA. FMN phosphoryl threonine is present on threonine 185. The next 5 membrane-spanning stretches (helical) occupy residues 212-232, 239-259, 265-285, 291-311, and 315-335; these read GTGV…LVLL, WHIS…GFLL, ASPL…FIAT, ATSP…VYVI, and GGYP…APFI.

The protein belongs to the NqrB/RnfD family. As to quaternary structure, the complex is composed of six subunits: RnfA, RnfB, RnfC, RnfD, RnfE and RnfG. FMN serves as cofactor.

The protein localises to the cell inner membrane. Functionally, part of a membrane-bound complex that couples electron transfer with translocation of ions across the membrane. The sequence is that of Ion-translocating oxidoreductase complex subunit D from Shewanella sp. (strain MR-4).